The chain runs to 367 residues: Germination protease (367 aa).

A propeptide spanning residues 1-15 (MKEPLDLSKYSVRTD) is cleaved from the precursor.

The protein belongs to the peptidase A25 family. As to quaternary structure, homotetramer. Autoproteolytically processed. The inactive tetrameric zymogen termed p46 autoprocesses to a smaller form termed p41, which is active only during spore germination.

It carries out the reaction Endopeptidase action with P4 Glu or Asp, P1 preferably Glu &gt; Asp, P1' hydrophobic and P2' Ala.. Functionally, initiates the rapid degradation of small, acid-soluble proteins during spore germination. This chain is Germination protease, found in Bacillus cereus (strain ATCC 10987 / NRS 248).